Consider the following 473-residue polypeptide: 3-isopropylmalate dehydratase large subunit (473 aa).

3 residues coordinate [4Fe-4S] cluster: C354, C414, and C417. A disordered region spans residues L425 to R448.

This sequence belongs to the aconitase/IPM isomerase family. LeuC type 1 subfamily. As to quaternary structure, heterodimer of LeuC and LeuD. It depends on [4Fe-4S] cluster as a cofactor.

It catalyses the reaction (2R,3S)-3-isopropylmalate = (2S)-2-isopropylmalate. It functions in the pathway amino-acid biosynthesis; L-leucine biosynthesis; L-leucine from 3-methyl-2-oxobutanoate: step 2/4. In terms of biological role, catalyzes the isomerization between 2-isopropylmalate and 3-isopropylmalate, via the formation of 2-isopropylmaleate. This chain is 3-isopropylmalate dehydratase large subunit, found in Acidothermus cellulolyticus (strain ATCC 43068 / DSM 8971 / 11B).